A 305-amino-acid chain; its full sequence is Porphobilinogen deaminase (305 aa).

At C239 the chain carries S-(dipyrrolylmethanemethyl)cysteine.

Belongs to the HMBS family. Monomer. The cofactor is dipyrromethane.

It carries out the reaction 4 porphobilinogen + H2O = hydroxymethylbilane + 4 NH4(+). It participates in porphyrin-containing compound metabolism; protoporphyrin-IX biosynthesis; coproporphyrinogen-III from 5-aminolevulinate: step 2/4. In terms of biological role, tetrapolymerization of the monopyrrole PBG into the hydroxymethylbilane pre-uroporphyrinogen in several discrete steps. The protein is Porphobilinogen deaminase of Dichelobacter nodosus (strain VCS1703A).